Here is a 1384-residue protein sequence, read N- to C-terminus: DNA-directed RNA polymerase subunit beta (1384 aa).

It belongs to the RNA polymerase beta chain family. As to quaternary structure, the RNAP catalytic core consists of 2 alpha, 1 beta, 1 beta' and 1 omega subunit. When a sigma factor is associated with the core the holoenzyme is formed, which can initiate transcription.

The catalysed reaction is RNA(n) + a ribonucleoside 5'-triphosphate = RNA(n+1) + diphosphate. Functionally, DNA-dependent RNA polymerase catalyzes the transcription of DNA into RNA using the four ribonucleoside triphosphates as substrates. In Xylella fastidiosa (strain M12), this protein is DNA-directed RNA polymerase subunit beta.